Reading from the N-terminus, the 328-residue chain is Phenylalanine--tRNA ligase alpha subunit (328 aa).

Glu-253 is a binding site for Mg(2+).

This sequence belongs to the class-II aminoacyl-tRNA synthetase family. Phe-tRNA synthetase alpha subunit type 1 subfamily. In terms of assembly, tetramer of two alpha and two beta subunits. The cofactor is Mg(2+).

The protein localises to the cytoplasm. The enzyme catalyses tRNA(Phe) + L-phenylalanine + ATP = L-phenylalanyl-tRNA(Phe) + AMP + diphosphate + H(+). The polypeptide is Phenylalanine--tRNA ligase alpha subunit (Actinobacillus pleuropneumoniae serotype 7 (strain AP76)).